The chain runs to 342 residues: NADPH-dependent methylglyoxal reductase GRE2 (342 aa).

NADP(+) is bound by residues 7–12 (GANGFI), Arg32, Lys36, 57–58 (DI), Tyr165, Lys169, Val199, and Ser216. Catalysis depends on Lys169, which acts as the Proton donor. Residue Ser333 is modified to Phosphoserine.

Belongs to the NAD(P)-dependent epimerase/dehydratase family. Dihydroflavonol-4-reductase subfamily. In terms of assembly, monomer. In terms of processing, the N-terminus is blocked.

It localises to the cytoplasm. It is found in the nucleus. It catalyses the reaction (S)-lactaldehyde + NADP(+) = methylglyoxal + NADPH + H(+). It carries out the reaction 3-methylbutanol + NADP(+) = 3-methylbutanal + NADPH + H(+). The enzyme catalyses 2,5-hexanedione + 2 NADPH + 2 H(+) = (2S,5S)-hexanediol + 2 NADP(+). The catalysed reaction is (S)-3-chloro-1-phenyl-1-propanol + NADP(+) = 3-chloro-1-phenyl-1-propanone + NADPH + H(+). Its activity is regulated as follows. Activated by glutathione. Its function is as follows. Catalyzes the irreversible reduction of the cytotoxic compound methylglyoxal (MG, 2-oxopropanal) to (S)-lactaldehyde as an alternative to detoxification of MG by glyoxalase I GLO1. MG is synthesized via a bypath of glycolysis from dihydroxyacetone phosphate and is believed to play a role in cell cycle regulation and stress adaptation. Also catalyzes the reduction of 3-methylbutanal to 3-methylbutanol. Acts as a suppressor of 3-methylbutanol-induced filamentation by modulating the levels of 3-methylbutanal, the signal to which cells respond by filamentation. Also involved in ergosterol metabolism. In Saccharomyces cerevisiae (strain ATCC 204508 / S288c) (Baker's yeast), this protein is NADPH-dependent methylglyoxal reductase GRE2 (GRE2).